The sequence spans 231 residues: 5'-methylthioadenosine/S-adenosylhomocysteine nucleosidase (231 aa).

Residue E12 is the Proton acceptor of the active site. Residues G78, V153, and 174-175 (ME) contribute to the substrate site. The active-site Proton donor is the D198.

Belongs to the PNP/UDP phosphorylase family. MtnN subfamily.

It catalyses the reaction S-adenosyl-L-homocysteine + H2O = S-(5-deoxy-D-ribos-5-yl)-L-homocysteine + adenine. The enzyme catalyses S-methyl-5'-thioadenosine + H2O = 5-(methylsulfanyl)-D-ribose + adenine. It carries out the reaction 5'-deoxyadenosine + H2O = 5-deoxy-D-ribose + adenine. It functions in the pathway amino-acid biosynthesis; L-methionine biosynthesis via salvage pathway; S-methyl-5-thio-alpha-D-ribose 1-phosphate from S-methyl-5'-thioadenosine (hydrolase route): step 1/2. In terms of biological role, catalyzes the irreversible cleavage of the glycosidic bond in both 5'-methylthioadenosine (MTA) and S-adenosylhomocysteine (SAH/AdoHcy) to adenine and the corresponding thioribose, 5'-methylthioribose and S-ribosylhomocysteine, respectively. Also cleaves 5'-deoxyadenosine, a toxic by-product of radical S-adenosylmethionine (SAM) enzymes, into 5-deoxyribose and adenine. In Vibrio atlanticus (strain LGP32) (Vibrio splendidus (strain Mel32)), this protein is 5'-methylthioadenosine/S-adenosylhomocysteine nucleosidase.